Consider the following 156-residue polypeptide: ATP synthase subunit b (156 aa).

A helical membrane pass occupies residues L7 to L29.

The protein belongs to the ATPase B chain family. F-type ATPases have 2 components, F(1) - the catalytic core - and F(0) - the membrane proton channel. F(1) has five subunits: alpha(3), beta(3), gamma(1), delta(1), epsilon(1). F(0) has three main subunits: a(1), b(2) and c(10-14). The alpha and beta chains form an alternating ring which encloses part of the gamma chain. F(1) is attached to F(0) by a central stalk formed by the gamma and epsilon chains, while a peripheral stalk is formed by the delta and b chains.

It localises to the cell inner membrane. Its function is as follows. F(1)F(0) ATP synthase produces ATP from ADP in the presence of a proton or sodium gradient. F-type ATPases consist of two structural domains, F(1) containing the extramembraneous catalytic core and F(0) containing the membrane proton channel, linked together by a central stalk and a peripheral stalk. During catalysis, ATP synthesis in the catalytic domain of F(1) is coupled via a rotary mechanism of the central stalk subunits to proton translocation. Component of the F(0) channel, it forms part of the peripheral stalk, linking F(1) to F(0). In Vibrio parahaemolyticus serotype O3:K6 (strain RIMD 2210633), this protein is ATP synthase subunit b.